A 292-amino-acid chain; its full sequence is Geranyl diphosphate 2-C-methyltransferase (292 aa).

It belongs to the geranyl diphosphate 2-C-methyltransferase family. The cofactor is Mg(2+).

The catalysed reaction is (2E)-geranyl diphosphate + S-adenosyl-L-methionine = (E)-2-methylgeranyl diphosphate + S-adenosyl-L-homocysteine + H(+). Catalyzes the SAM-dependent methylation of geranyl diphosphate (GPP) to yield (E)-2-methylgeranyl diphosphate (2-MeGPP). The chain is Geranyl diphosphate 2-C-methyltransferase from Streptomyces coelicolor (strain ATCC BAA-471 / A3(2) / M145).